We begin with the raw amino-acid sequence, 289 residues long: 3-methyl-2-oxobutanoate hydroxymethyltransferase (289 aa).

The segment covering 1–15 (MSTTFKLDTSTSRAN) has biased composition (polar residues). The interval 1–21 (MSTTFKLDTSTSRANPTPAPM) is disordered. Residues aspartate 67 and aspartate 106 each contribute to the Mg(2+) site. 3-methyl-2-oxobutanoate is bound by residues 67–68 (DS), aspartate 106, and lysine 136. Glutamate 138 lines the Mg(2+) pocket. The active-site Proton acceptor is glutamate 205.

The protein belongs to the PanB family. Homodecamer; pentamer of dimers. It depends on Mg(2+) as a cofactor.

The protein resides in the cytoplasm. It carries out the reaction 3-methyl-2-oxobutanoate + (6R)-5,10-methylene-5,6,7,8-tetrahydrofolate + H2O = 2-dehydropantoate + (6S)-5,6,7,8-tetrahydrofolate. It functions in the pathway cofactor biosynthesis; (R)-pantothenate biosynthesis; (R)-pantoate from 3-methyl-2-oxobutanoate: step 1/2. In terms of biological role, catalyzes the reversible reaction in which hydroxymethyl group from 5,10-methylenetetrahydrofolate is transferred onto alpha-ketoisovalerate to form ketopantoate. The chain is 3-methyl-2-oxobutanoate hydroxymethyltransferase from Erythrobacter litoralis (strain HTCC2594).